The chain runs to 329 residues: GTP 3',8-cyclase (329 aa).

In terms of domain architecture, Radical SAM core spans 8 to 234; that stretch reads AFARKFYYLR…QLRQRSDGPA (227 aa). Position 17 (Arg17) interacts with GTP. Cys24 and Cys28 together coordinate [4Fe-4S] cluster. S-adenosyl-L-methionine is bound at residue Tyr30. Cys31 is a [4Fe-4S] cluster binding site. Arg68 lines the GTP pocket. Position 72 (Gly72) interacts with S-adenosyl-L-methionine. GTP is bound at residue Thr99. Ser123 contacts S-adenosyl-L-methionine. A GTP-binding site is contributed by Lys160. Residue Met194 coordinates S-adenosyl-L-methionine. [4Fe-4S] cluster contacts are provided by Cys257 and Cys260. GTP is bound at residue 262-264; the sequence is RLR. Cys274 contacts [4Fe-4S] cluster.

The protein belongs to the radical SAM superfamily. MoaA family. Monomer and homodimer. The cofactor is [4Fe-4S] cluster.

The enzyme catalyses GTP + AH2 + S-adenosyl-L-methionine = (8S)-3',8-cyclo-7,8-dihydroguanosine 5'-triphosphate + 5'-deoxyadenosine + L-methionine + A + H(+). The protein operates within cofactor biosynthesis; molybdopterin biosynthesis. Catalyzes the cyclization of GTP to (8S)-3',8-cyclo-7,8-dihydroguanosine 5'-triphosphate. This is GTP 3',8-cyclase from Shigella sonnei (strain Ss046).